We begin with the raw amino-acid sequence, 103 residues long: Histone H4 (103 aa).

Residues 1–14 (MSGRGKGGKGLGKG) show a composition bias toward gly residues. Residues 1–20 (MSGRGKGGKGLGKGGAKRHR) form a disordered region. K6 is subject to N6-acetyl-N6-methyllysine; alternate. An N6-methyllysine; alternate mark is found at K6, K9, and K13. K13 carries the post-translational modification N6-acetyl-N6-methyllysine; alternate. A DNA-binding region spans residues 17 to 21 (KRHRK). N6-glutaryllysine is present on K92.

This sequence belongs to the histone H4 family. As to quaternary structure, the nucleosome is a histone octamer containing two molecules each of H2A, H2B, H3 and H4 assembled in one H3-H4 heterotetramer and two H2A-H2B heterodimers. The octamer wraps approximately 147 bp of DNA. Post-translationally, glutarylation at Lys-92 (H4K91glu) destabilizes nucleosomes by promoting dissociation of the H2A-H2B dimers from nucleosomes.

It is found in the nucleus. The protein resides in the chromosome. Functionally, core component of nucleosome. Nucleosomes wrap and compact DNA into chromatin, limiting DNA accessibility to the cellular machineries which require DNA as a template. Histones thereby play a central role in transcription regulation, DNA repair, DNA replication and chromosomal stability. DNA accessibility is regulated via a complex set of post-translational modifications of histones, also called histone code, and nucleosome remodeling. The polypeptide is Histone H4 (HHF1) (Candida glabrata (strain ATCC 2001 / BCRC 20586 / JCM 3761 / NBRC 0622 / NRRL Y-65 / CBS 138) (Yeast)).